Consider the following 269-residue polypeptide: Voltage-gated hydrogen channel 1 (269 aa).

Residues 1-96 lie on the Cytoplasmic side of the membrane; it reads MTSHDPKAVT…RLRKLFSSHR (96 aa). Threonine 29 is subject to Phosphothreonine. A disordered region spans residues 46–79; it reads ENEEEEEEPAPTSAEGEGNAEGPDAEAGSASTPR. The residue at position 93 (serine 93) is a Phosphoserine. A helical membrane pass occupies residues 97 to 117; that stretch reads FQVIIICLVVLDALLVLAELL. Residues 118 to 134 are Extracellular-facing; the sequence is LDLKIIEPDEQDYAVTA. A helical membrane pass occupies residues 135 to 157; that stretch reads FHYMSFAILVFFMLEIFFKIFVF. Residues 158-165 lie on the Cytoplasmic side of the membrane; the sequence is RLEFFHHK. A helical transmembrane segment spans residues 166-186; it reads FEILDAFVVVVSFVLDLVLLF. Residues 187–193 lie on the Extracellular side of the membrane; it reads KSHHFEA. A helical membrane pass occupies residues 194–214; it reads LGLLILLRLWRVARIINGIII. Residues 215 to 269 lie on the Cytoplasmic side of the membrane; it reads SVKTRSERQILRLKQINIQLATKIQHLEFSCSEKEQEIERLNKLLKQNGLLGDVN. Positions 221 to 261 form a coiled coil; that stretch reads ERQILRLKQINIQLATKIQHLEFSCSEKEQEIERLNKLLKQ.

Belongs to the voltage-gated proton channel (VPC) (TC 1.A.51) family. As to quaternary structure, homodimer; each protomer forms its own proton conduction pathway. Post-translationally, phosphorylated in vitro by PRKCD. Phosphorylation may enhance channel gating. Enriched in immune tissues, such as bone marrow, macrophages and spleen.

The protein localises to the cell membrane. Its subcellular location is the apical cell membrane. It localises to the cytoplasmic vesicle. The protein resides in the phagosome membrane. It is found in the cell projection. The protein localises to the cilium. Its subcellular location is the flagellum membrane. It carries out the reaction H(+)(in) = H(+)(out). Its activity is regulated as follows. The dimers display cooperative channel gating. The channel activity is inhibited by zinc ions. In terms of biological role, voltage-gated proton-selective channel that conducts outward proton currents in response to intracellular acidification. Lacks a canonical ion-channel pore domain and mediates proton permeability via its voltage sensor domain. Provides for proton efflux that compensates for electron charge generated by NADPH oxidase activity either in the extracellular or phagosomal compartments, thus enabling the production of high levels of bactericidal reactive oxygen species during the respiratory burst. Opens when the pH of airway surface liquid exceeds 7 and contributes to respiratory epithelial acid secretion to maintain pH in the mucosa. The sequence is that of Voltage-gated hydrogen channel 1 from Mus musculus (Mouse).